Reading from the N-terminus, the 387-residue chain is Protein REVEILLE 1 (387 aa).

Polar residues-rich tracts occupy residues 1 to 17 (MASSPLTANVQGTNASL) and 27 to 37 (KQIQFNDQSFG). The interval 1–44 (MASSPLTANVQGTNASLRNRDEETADKQIQFNDQSFGGNDYAPK) is disordered. An HTH myb-type domain is found at 50–104 (TITKERERWTDEEHKKFVEALKLYGRAWRRIEEHVGSKTAVQIRSHAQKFFSKVA). The segment at residues 77-100 (WRRIEEHVGSKTAVQIRSHAQKFF) is a DNA-binding region (H-T-H motif). Disordered regions lie at residues 105-200 (REAT…TANA), 306-334 (KAVQNEGSSTGSNTGSVDDTGHTEKTTEP), and 350-387 (AFSELRRTNSESNSRGFGPYKKRKMVTEEEEHEIHLHL). Over residues 124–134 (RPKRKPAHPYP) the composition is skewed to basic residues. Over residues 141–166 (ADQTSRSVSPSERDTQSPTSVLSTVG) the composition is skewed to polar residues. 2 stretches are compositionally biased toward low complexity: residues 172–200 (SLDSSSPNRSLSPVSSASPPAALTTTANA) and 312–323 (GSSTGSNTGSVD). The span at 324–333 (DTGHTEKTTE) shows a compositional bias: basic and acidic residues.

Its subcellular location is the nucleus. Morning-phased transcription factor integrating the circadian clock and auxin pathways. Binds to the evening element (EE) of promoters. Does not act within the central clock, but regulates free auxin levels in a time-of-day specific manner. Positively regulates the expression of YUC8 during the day, but has no effect during the night. Negative regulator of freezing tolerance. The sequence is that of Protein REVEILLE 1 (RVE1) from Arabidopsis thaliana (Mouse-ear cress).